The chain runs to 334 residues: Oligopeptide transport ATP-binding protein OppF (334 aa).

The ABC transporter domain occupies 12–265 (LEIADLKVHF…PLHPYTRALM (254 aa)). An ATP-binding site is contributed by 57-64 (GESGCGKS).

This sequence belongs to the ABC transporter superfamily. In terms of assembly, the complex is composed of two ATP-binding proteins (OppD and OppF), two transmembrane proteins (OppB and OppC) and a solute-binding protein (OppA or MppA).

The protein resides in the cell inner membrane. The catalysed reaction is a [peptide](out) + ATP + H2O = a [peptide](in) + ADP + phosphate + H(+). It catalyses the reaction L-alanyl-gamma-D-glutamyl-meso-2,6-diaminopimelate(out) + ATP + H2O = L-alanyl-gamma-D-glutamyl-meso-2,6-diaminopimelate(in) + ADP + phosphate + H(+). Part of the ABC transporter complex OppABCDF involved in the uptake of oligopeptides and of the ABC transporter complex MppA-OppBCDF involved in the uptake of the cell wall murein tripeptide L-alanyl-gamma-D-glutamyl-meso-diaminopimelate. Probably responsible for energy coupling to the transport system. Plays an important nutritional role and is involved in the recycling of cell wall peptides. The chain is Oligopeptide transport ATP-binding protein OppF (oppF) from Escherichia coli (strain K12).